A 418-amino-acid polypeptide reads, in one-letter code: Glutamyl-tRNA reductase (418 aa).

Substrate contacts are provided by residues threonine 49–arginine 52, serine 109, glutamate 114–glutamine 116, and glutamine 120. Cysteine 50 acts as the Nucleophile in catalysis. Glycine 189 to isoleucine 194 lines the NADP(+) pocket.

It belongs to the glutamyl-tRNA reductase family. As to quaternary structure, homodimer.

It carries out the reaction (S)-4-amino-5-oxopentanoate + tRNA(Glu) + NADP(+) = L-glutamyl-tRNA(Glu) + NADPH + H(+). It functions in the pathway porphyrin-containing compound metabolism; protoporphyrin-IX biosynthesis; 5-aminolevulinate from L-glutamyl-tRNA(Glu): step 1/2. Catalyzes the NADPH-dependent reduction of glutamyl-tRNA(Glu) to glutamate 1-semialdehyde (GSA). This chain is Glutamyl-tRNA reductase, found in Erwinia tasmaniensis (strain DSM 17950 / CFBP 7177 / CIP 109463 / NCPPB 4357 / Et1/99).